The chain runs to 429 residues: MNVLIIGSGGREHALGWKAAQNPNVETIFVAPGNAGTALEPKLENVNIAVEDIAGLVAFAKEKAIELTIVGPEVPLVLGVVDAFYEAGLPIFGPTQAAAQLEGSKAFTKDFLARHQIPTAAYANFTDIEPALAYVREQGAPIVVKADGLAAGKGVIVAMTLEEAEEAIKDMLAGNAFGEAGSRVVIEEFLDGEEASFIVMVDGENVLPMATSQDHKRVGDKDTGPNTGGMGAYSPAPVVTPEIHNRVMQEVIFPTVRGMAAEGNPYTGFLYAGLMIDKDGTPKVIEYNCRFGDPETQPIMMRMESDLVELCLAAIDKKLDQVESKWDPRASIGIVLAAGGYPAAYNKGDVISGLPQVEIEGEKVFHAGTENKEGDIVTNGGRVLCATALGNSVSEAQQRAYELAKQIRWEGMFHRNDIGYRAIAREQQK.

In terms of domain architecture, ATP-grasp spans 109-316 (KDFLARHQIP…LVELCLAAID (208 aa)). 135-196 (VREQGAPIVV…EEFLDGEEAS (62 aa)) lines the ATP pocket. A disordered region spans residues 212–234 (SQDHKRVGDKDTGPNTGGMGAYS). Over residues 213 to 223 (QDHKRVGDKDT) the composition is skewed to basic and acidic residues. Mg(2+) is bound by residues Glu286 and Asn288.

The protein belongs to the GARS family. It depends on Mg(2+) as a cofactor. Requires Mn(2+) as cofactor.

It carries out the reaction 5-phospho-beta-D-ribosylamine + glycine + ATP = N(1)-(5-phospho-beta-D-ribosyl)glycinamide + ADP + phosphate + H(+). The protein operates within purine metabolism; IMP biosynthesis via de novo pathway; N(1)-(5-phospho-D-ribosyl)glycinamide from 5-phospho-alpha-D-ribose 1-diphosphate: step 2/2. In Vibrio vulnificus (strain CMCP6), this protein is Phosphoribosylamine--glycine ligase.